The chain runs to 602 residues: Elongation factor 4 (602 aa).

One can recognise a tr-type G domain in the interval 8–190 (DLIRNFSIVA…AIVHRLPPPK (183 aa)). GTP contacts are provided by residues 20–25 (DHGKST) and 137–140 (NKID).

This sequence belongs to the TRAFAC class translation factor GTPase superfamily. Classic translation factor GTPase family. LepA subfamily.

The protein localises to the cell inner membrane. The enzyme catalyses GTP + H2O = GDP + phosphate + H(+). Its function is as follows. Required for accurate and efficient protein synthesis under certain stress conditions. May act as a fidelity factor of the translation reaction, by catalyzing a one-codon backward translocation of tRNAs on improperly translocated ribosomes. Back-translocation proceeds from a post-translocation (POST) complex to a pre-translocation (PRE) complex, thus giving elongation factor G a second chance to translocate the tRNAs correctly. Binds to ribosomes in a GTP-dependent manner. In Cereibacter sphaeroides (strain KD131 / KCTC 12085) (Rhodobacter sphaeroides), this protein is Elongation factor 4.